Consider the following 479-residue polypeptide: Protein kinase 2 (479 aa).

The interval 1–136 (MGKGQSKIKN…NGNDDEDEGP (136 aa)) is disordered. Low complexity-rich tracts occupy residues 52-65 (AQQQ…TTAA) and 79-96 (IPAP…TPTI). Over residues 102 to 115 (NTDNNNINGASNEA) the composition is skewed to polar residues. Positions 153-407 (FELLNVIGKG…GGEVKQHPWF (255 aa)) constitute a Protein kinase domain. Residues 159-167 (IGKGSFGKV) and K182 each bind ATP. The active-site Proton acceptor is the D276. Phosphothreonine; by autocatalysis is present on T309. One can recognise an AGC-kinase C-terminal domain in the interval 408–479 (KNIDWEKLDR…TYVADSILKD (72 aa)). T470 is subject to Phosphothreonine.

It belongs to the protein kinase superfamily. AGC Ser/Thr protein kinase family. S6 kinase subfamily. Post-translationally, seems to be myristoylated.

Its subcellular location is the cytoplasm. It localises to the cell membrane. It catalyses the reaction L-seryl-[protein] + ATP = O-phospho-L-seryl-[protein] + ADP + H(+). The enzyme catalyses L-threonyl-[protein] + ATP = O-phospho-L-threonyl-[protein] + ADP + H(+). Functionally, required for morphogenesis during multicellular development. Phosphorylates talB, gefN, gefS, PI4P 5-kinase and gacQ. This Dictyostelium discoideum (Social amoeba) protein is Protein kinase 2 (pkgB).